Consider the following 595-residue polypeptide: Leiomodin-1 (595 aa).

Disordered stretches follow at residues 1-69, 81-322, and 467-568; these read MSKV…EAML, QREM…KVKN, and DKQR…QEKN. At Ser12 the chain carries Phosphoserine. Positions 27-40 are enriched in acidic residues; that stretch reads EEMEELEKELDVVD. Basic and acidic residues-rich tracts occupy residues 81-110, 117-127, 134-192, 200-223, 230-249, 257-287, 467-476, and 484-493; these read QREM…DASR, QDSDLGKEPKK, FSRD…EKTG, SRDK…KLTA, GRRE…KPED, RDWR…KAPE, DKQRQKRLQE, and SGEKKDRLEV. Phosphoserine is present on Ser85. At Ser135 the chain carries Phosphoserine. A run of 8 repeats spans residues 165-179, 180-195, 196-211, 212-226, 227-240, 242-255, 256-271, and 272-288. The tract at residues 165 to 288 is 8 X approximate tandem repeats; sequence AAVDRKESGK…EESKTKAPEK (124 aa). The 5 X 4 AA approximate tandem repeats stretch occupies residues 503 to 522; the sequence is SPKPSPQPSPKPAPKNSPKK. Pro residues-rich tracts occupy residues 505 to 517 and 527 to 538; these read KPSP…PAPK and AAPPPPPPPLAP. Ser550 is modified (phosphoserine). Residues 569 to 588 form the WH2 domain; the sequence is SRDQLLAAIRSSNLKQLKKV.

It belongs to the tropomodulin family. Detected in aorta, urinary bladder and uterus (at protein level). Detected in smooth muscle cells. Detected in aorta, bladder, colon, intestine, stomach and uterus.

It is found in the cytoplasm. Its subcellular location is the myofibril. The protein resides in the sarcomere. It localises to the cytoskeleton. In terms of biological role, required for proper contractility of visceral smooth muscle cells. Mediates nucleation of actin filaments. This chain is Leiomodin-1 (Lmod1), found in Mus musculus (Mouse).